The sequence spans 94 residues: Cell division topological specificity factor (94 aa).

Belongs to the MinE family.

Prevents the cell division inhibition by proteins MinC and MinD at internal division sites while permitting inhibition at polar sites. This ensures cell division at the proper site by restricting the formation of a division septum at the midpoint of the long axis of the cell. This chain is Cell division topological specificity factor, found in Clostridioides difficile (strain 630) (Peptoclostridium difficile).